Consider the following 423-residue polypeptide: MTDRLIIQGGKKLSGTLQVDGAKNSAVALIPAAILAESEVVLEGLPDISDVYTLYDILEELGGSVRYDNKTAIIDPTDMLSMPLPSGNVKKLRASYYLMGAMLGRFKKAVIGLPGGCYLGPRPIDQHIKGFEALGAKVTNEQGAIYLRADELKGARIYLDVVSVGATINIMLAAVRAKGKTVIENAAKEPEIIDVATLLTNMGAIIKGAGTDTIRITGVDHLHGCHHTIIPDRIEAGTFMVLAAASGKGIRIENVIPTHLEGIIAKLTEMGVPMDIEEDSIFIGEVENIKKVDIKTYAYPGFPTDLQQPLTALLTRAEGSSVITDTIYPSRFKHIAELERMGGKFKLEGRSAVISGPAKLQGSKVTATDLRAGAALVIAGLLAEGRTEIHGVEHIERGYSKIIEKLSAIGADITRSSTAETNI.

23 to 24 (KN) lines the phosphoenolpyruvate pocket. UDP-N-acetyl-alpha-D-glucosamine is bound at residue R93. C117 functions as the Proton donor in the catalytic mechanism. C117 carries the post-translational modification 2-(S-cysteinyl)pyruvic acid O-phosphothioketal. Residues 122 to 126 (RPIDQ), D305, and I327 contribute to the UDP-N-acetyl-alpha-D-glucosamine site.

Belongs to the EPSP synthase family. MurA subfamily.

It is found in the cytoplasm. It catalyses the reaction phosphoenolpyruvate + UDP-N-acetyl-alpha-D-glucosamine = UDP-N-acetyl-3-O-(1-carboxyvinyl)-alpha-D-glucosamine + phosphate. Its pathway is cell wall biogenesis; peptidoglycan biosynthesis. Its function is as follows. Cell wall formation. Adds enolpyruvyl to UDP-N-acetylglucosamine. The protein is UDP-N-acetylglucosamine 1-carboxyvinyltransferase 2 of Listeria monocytogenes serovar 1/2a (strain ATCC BAA-679 / EGD-e).